Reading from the N-terminus, the 207-residue chain is Proteasome subunit beta (207 aa).

Residues Met1–Gly9 constitute a propeptide, removed in mature form; by autocatalysis. Thr10 functions as the Nucleophile in the catalytic mechanism.

The protein belongs to the peptidase T1B family. As to quaternary structure, the 20S proteasome core is composed of 14 alpha and 14 beta subunits that assemble into four stacked heptameric rings, resulting in a barrel-shaped structure. The two inner rings, each composed of seven catalytic beta subunits, are sandwiched by two outer rings, each composed of seven alpha subunits. The catalytic chamber with the active sites is on the inside of the barrel. Has a gated structure, the ends of the cylinder being occluded by the N-termini of the alpha-subunits. Is capped at one or both ends by the proteasome regulatory ATPase, PAN.

The protein localises to the cytoplasm. The catalysed reaction is Cleavage of peptide bonds with very broad specificity.. With respect to regulation, the formation of the proteasomal ATPase PAN-20S proteasome complex, via the docking of the C-termini of PAN into the intersubunit pockets in the alpha-rings, triggers opening of the gate for substrate entry. Interconversion between the open-gate and close-gate conformations leads to a dynamic regulation of the 20S proteasome proteolysis activity. Component of the proteasome core, a large protease complex with broad specificity involved in protein degradation. This is Proteasome subunit beta from Methanobrevibacter ruminantium (strain ATCC 35063 / DSM 1093 / JCM 13430 / OCM 146 / M1) (Methanobacterium ruminantium).